Here is a 112-residue protein sequence, read N- to C-terminus: Small ribosomal subunit protein bS6 (112 aa).

The protein belongs to the bacterial ribosomal protein bS6 family.

Binds together with bS18 to 16S ribosomal RNA. This chain is Small ribosomal subunit protein bS6, found in Chlamydia felis (strain Fe/C-56) (Chlamydophila felis).